A 255-amino-acid polypeptide reads, in one-letter code: ParA family protein TC_0871 (255 aa).

The protein belongs to the ParA family.

The sequence is that of ParA family protein TC_0871 from Chlamydia muridarum (strain MoPn / Nigg).